The primary structure comprises 369 residues: Queuine tRNA-ribosyltransferase (369 aa).

Residue aspartate 90 is the Proton acceptor of the active site. Substrate-binding positions include 90-94, aspartate 144, glutamine 186, and glycine 213; that span reads DSGGF. Residues 244–250 form an RNA binding region; the sequence is GVGKPAD. Residue aspartate 263 is the Nucleophile of the active site. 4 residues coordinate Zn(2+): cysteine 301, cysteine 303, cysteine 306, and histidine 332.

The protein belongs to the queuine tRNA-ribosyltransferase family. Homodimer. Within each dimer, one monomer is responsible for RNA recognition and catalysis, while the other monomer binds to the replacement base PreQ1. Zn(2+) serves as cofactor.

It catalyses the reaction 7-aminomethyl-7-carbaguanine + guanosine(34) in tRNA = 7-aminomethyl-7-carbaguanosine(34) in tRNA + guanine. It participates in tRNA modification; tRNA-queuosine biosynthesis. In terms of biological role, catalyzes the base-exchange of a guanine (G) residue with the queuine precursor 7-aminomethyl-7-deazaguanine (PreQ1) at position 34 (anticodon wobble position) in tRNAs with GU(N) anticodons (tRNA-Asp, -Asn, -His and -Tyr). Catalysis occurs through a double-displacement mechanism. The nucleophile active site attacks the C1' of nucleotide 34 to detach the guanine base from the RNA, forming a covalent enzyme-RNA intermediate. The proton acceptor active site deprotonates the incoming PreQ1, allowing a nucleophilic attack on the C1' of the ribose to form the product. After dissociation, two additional enzymatic reactions on the tRNA convert PreQ1 to queuine (Q), resulting in the hypermodified nucleoside queuosine (7-(((4,5-cis-dihydroxy-2-cyclopenten-1-yl)amino)methyl)-7-deazaguanosine). This chain is Queuine tRNA-ribosyltransferase, found in Dichelobacter nodosus (strain VCS1703A).